A 157-amino-acid polypeptide reads, in one-letter code: Oocyte zinc finger protein XlCOF2 (157 aa).

5 consecutive C2H2-type zinc fingers follow at residues phenylalanine 6–histidine 28, tyrosine 34–proline 56, phenylalanine 79–histidine 101, phenylalanine 107–histidine 129, and phenylalanine 135–histidine 157.

Belongs to the krueppel C2H2-type zinc-finger protein family.

The protein localises to the nucleus. May be involved in transcriptional regulation. The protein is Oocyte zinc finger protein XlCOF2 of Xenopus laevis (African clawed frog).